The primary structure comprises 317 residues: Ribosomal protein L11 methyltransferase (317 aa).

Thr-158, Gly-179, Asp-201, and Asn-244 together coordinate S-adenosyl-L-methionine.

It belongs to the methyltransferase superfamily. PrmA family.

The protein resides in the cytoplasm. The catalysed reaction is L-lysyl-[protein] + 3 S-adenosyl-L-methionine = N(6),N(6),N(6)-trimethyl-L-lysyl-[protein] + 3 S-adenosyl-L-homocysteine + 3 H(+). In terms of biological role, methylates ribosomal protein L11. The chain is Ribosomal protein L11 methyltransferase from Lactococcus lactis subsp. cremoris (strain MG1363).